We begin with the raw amino-acid sequence, 159 residues long: 3-dehydroquinate dehydratase (159 aa).

The active-site Proton acceptor is the Tyr-22. Positions 73, 79, and 86 each coordinate substrate. His-99 functions as the Proton donor in the catalytic mechanism. Substrate is bound by residues 100 to 101 (IS) and Arg-110.

Belongs to the type-II 3-dehydroquinase family. In terms of assembly, homododecamer.

It carries out the reaction 3-dehydroquinate = 3-dehydroshikimate + H2O. The protein operates within metabolic intermediate biosynthesis; chorismate biosynthesis; chorismate from D-erythrose 4-phosphate and phosphoenolpyruvate: step 3/7. In terms of biological role, catalyzes a trans-dehydration via an enolate intermediate. This chain is 3-dehydroquinate dehydratase, found in Campylobacter jejuni subsp. jejuni serotype O:6 (strain 81116 / NCTC 11828).